Reading from the N-terminus, the 348-residue chain is Ribonuclease H (348 aa).

Residues 54–65 are compositionally biased toward polar residues; the sequence is NTTSNYGSSTHA. A disordered region spans residues 54–81; sequence NTTSNYGSSTHAGGQVSKPHTTQKRVHR. An RNase H type-1 domain is found at 184–346; it reads YNKSMNVYCD…ADFLAKKGAS (163 aa). Mg(2+)-binding residues include D193, E235, D264, and D338.

The protein belongs to the RNase H family. Requires Mg(2+) as cofactor.

It carries out the reaction Endonucleolytic cleavage to 5'-phosphomonoester.. In terms of biological role, endonuclease that specifically degrades the RNA of RNA-DNA hybrids. This chain is Ribonuclease H (RNH1), found in Saccharomyces cerevisiae (strain ATCC 204508 / S288c) (Baker's yeast).